The primary structure comprises 472 residues: Eukaryotic translation initiation factor 2 subunit 3 (472 aa).

At A2 the chain carries N-acetylalanine; partial. S16 bears the Phosphoserine mark. Residues 39–248 (QATINIGTIG…IVKKIPVPPR (210 aa)) form the tr-type G domain. The segment at 48-55 (GHVAHGKS) is G1. Residue 51-56 (AHGKST) coordinates GTP. Positions 76–80 (NITIK) are G2. Positions 134-137 (DCPG) are G3. GTP contacts are provided by residues 190–193 (NKID) and 225–227 (SAQ). The interval 190–193 (NKID) is G4. The segment at 225 to 227 (SAQ) is G5. The segment at 457–469 (GQIRRGVTIKPTV) is interacts with CDC123.

The protein belongs to the TRAFAC class translation factor GTPase superfamily. Classic translation factor GTPase family. EIF2G subfamily. In terms of assembly, eukaryotic translation initiation factor 2 eIF2 is a heterotrimeric complex composed of an alpha (EIF2S1), a beta (EIF2S2) and a gamma (EIF2S3) chain. eIF2 is member of the 43S pre-initiation complex (43S PIC). Interacts (via C-terminus) with CDC123; the interaction is direct. As to expression, expressed in testis, brain, liver and muscle.

The protein localises to the cytoplasm. It is found in the cytosol. The enzyme catalyses GTP + H2O = GDP + phosphate + H(+). In terms of biological role, member of the eIF2 complex that functions in the early steps of protein synthesis by forming a ternary complex with GTP and initiator tRNA. This complex binds to a 40S ribosomal subunit, followed by mRNA binding to form the 43S pre-initiation complex (43S PIC). Junction of the 60S ribosomal subunit to form the 80S initiation complex is preceded by hydrolysis of the GTP bound to eIF2 and release of an eIF2-GDP binary complex. In order for eIF2 to recycle and catalyze another round of initiation, the GDP bound to eIF2 must exchange with GTP by way of a reaction catalyzed by eIF-2B. This chain is Eukaryotic translation initiation factor 2 subunit 3 (EIF2S3), found in Homo sapiens (Human).